A 1451-amino-acid polypeptide reads, in one-letter code: Dicer-like protein 2 (1451 aa).

Residues 34–53 (YDGHLSEEDSPGGKPRPKEQ) form a disordered region. Residues 70-247 (MLEASLKENI…LKRLESTLDA (178 aa)) enclose the Helicase ATP-binding domain. 83–90 (MDTGSGKT) is a binding site for ATP. The DEAH box motif lies at 190–193 (DEAH). The region spanning 412–582 (KVQRIIEVLL…RLEAIENSEA (171 aa)) is the Helicase C-terminal domain. In terms of domain architecture, Dicer dsRNA-binding fold spans 603–704 (AKSHLQHFVS…LPLRDRLELE (102 aa)). RNase III domains follow at residues 968–1111 (AAEL…VDGG) and 1153–1351 (LQLL…VDAG). A Mg(2+)-binding site is contributed by E1192. A disordered region spans residues 1253–1272 (EGDSDSKSSGDSTSDKASPR). Mg(2+)-binding residues include D1337 and E1340.

This sequence belongs to the helicase family. Dicer subfamily. The cofactor is Mg(2+). It depends on Mn(2+) as a cofactor.

Dicer-like endonuclease involved in cleaving double-stranded RNA in the RNA interference (RNAi) pathway. Produces 21 to 25 bp dsRNAs (siRNAs) which target the selective destruction of homologous RNAs leading to sequence-specific suppression of gene expression, called post-transcriptional gene silencing (PTGS). Part of a broad host defense, DCL-2 is involved in antiviral defense against mycoviruses like the hypovirus CHV1-EP713 and the reovirus MyRV1-Cp9B21. This is Dicer-like protein 2 (DCL-2) from Cryphonectria parasitica (Chestnut blight fungus).